The following is a 270-amino-acid chain: Small ribosomal subunit protein uS2 (270 aa).

This sequence belongs to the universal ribosomal protein uS2 family. As to quaternary structure, component of the small ribosomal subunit. Mature ribosomes consist of a small (40S) and a large (60S) subunit. The 40S subunit contains about 33 different proteins and 1 molecule of RNA (18S). The 60S subunit contains about 49 different proteins and 3 molecules of RNA (28S, 5.8S and 5S). Interacts with oho23B/rpS21.

Its subcellular location is the cytoplasm. It is found in the nucleus. Its function is as follows. Required for the assembly and/or stability of the 40S ribosomal subunit. Required for the processing of the 20S rRNA-precursor to mature 18S rRNA in a late step of the maturation of 40S ribosomal subunits. Required during oogenesis and imaginal development. The protein is Small ribosomal subunit protein uS2 of Drosophila persimilis (Fruit fly).